Reading from the N-terminus, the 145-residue chain is uncharacterized protein (145 aa).

This is an uncharacterized protein from Bacillus anthracis.